A 325-amino-acid polypeptide reads, in one-letter code: Basic membrane protein A (325 aa).

The N-terminal stretch at 1-3 is a signal peptide; that stretch reads FLS. Cysteine 4 carries N-palmitoyl cysteine lipidation. The S-diacylglycerol cysteine moiety is linked to residue cysteine 4.

This sequence belongs to the BMP lipoprotein family. Monomer.

Its subcellular location is the cell inner membrane. Immunogenic protein. May be part of an ABC-type nucleoside uptake system involved in the purine salvage pathway. This chain is Basic membrane protein A (bmpA), found in Borreliella afzelii (Borrelia afzelii).